A 243-amino-acid polypeptide reads, in one-letter code: Adenine phosphoribosyltransferase 1, chloroplastic (243 aa).

The N-terminal 52 residues, 1 to 52 (MQTIIISPLVSHRLCLARAVPCNRLLNNHHRAPPSIRLSNHRSTTSLRLFSS), are a transit peptide targeting the chloroplast. At Gln2 the chain carries N-acetylalanine.

The protein belongs to the purine/pyrimidine phosphoribosyltransferase family. As to quaternary structure, homodimer.

It localises to the plastid. It is found in the chloroplast. The protein resides in the cytoplasm. It catalyses the reaction AMP + diphosphate = 5-phospho-alpha-D-ribose 1-diphosphate + adenine. Its pathway is purine metabolism; AMP biosynthesis via salvage pathway; AMP from adenine: step 1/1. Functionally, catalyzes a salvage reaction resulting in the formation of AMP, that is energically less costly than de novo synthesis. Contributes primarily to the recycling of adenine into adenylate nucleotides, but is also involved in the inactivation of cytokinins by phosphoribosylation. Catalyzes the conversion of cytokinins from free bases (active form) to the corresponding nucleotides (inactive form). The protein is Adenine phosphoribosyltransferase 1, chloroplastic (APT1) of Arabidopsis thaliana (Mouse-ear cress).